Here is a 576-residue protein sequence, read N- to C-terminus: Polyphenol oxidase 3 (576 aa).

His61, His85, His94, His259, His263, and His296 together coordinate Cu cation. The 2'-(S-cysteinyl)-histidine (Cys-His) cross-link spans 83-85 (CTH). His263 serves as a coordination point for substrate. The propeptide at 393–576 (FVTTQTENPA…ILDDIIHRVN (184 aa)) is removed in mature form.

It belongs to the tyrosinase family. As to quaternary structure, tetramer composed of two subunits of PPO3 (H subunits) and two subunits of the as yet uncharacterized product of ORF239342 (L subunits). Cu(2+) serves as cofactor. Post-translationally, the C-ter is probably cleaved after Gly-392 since the mature active protein is smaller than the protein encoded by the gene.

It catalyses the reaction 2 L-dopa + O2 = 2 L-dopaquinone + 2 H2O. It carries out the reaction L-tyrosine + O2 = L-dopaquinone + H2O. Its function is as follows. Copper-containing oxidase that catalyzes both the o-hydroxylation of monophenols and the subsequent oxidation of the resulting o-diphenols into reactive o-quinones, which evolve spontaneously to produce intermediates, which associate in dark brown pigments. Involved in the initial step of melanin synthesis. Melanins constitute a mechanism of defense and resistance to stress such as UV radiations, free radicals, gamma rays, dehydratation and extreme temperatures, and contribute to the fungal cell-wall resistance against hydrolytic enzymes in avoiding cellular lysis. Fungal pigments are also involved in the formation and stability of spores. The chain is Polyphenol oxidase 3 (PPO3) from Agaricus bisporus (White button mushroom).